The primary structure comprises 459 residues: Flagellar radial spoke protein 6 (459 aa).

At Arg267 the chain carries Asymmetric dimethylarginine. Residues 309–330 form a disordered region; it reads QGRTVTHKRDPPDEEEEPEKNF. Arg398 carries the post-translational modification Asymmetric dimethylarginine. The segment at 418 to 459 is disordered; that stretch reads CPPPPPVPQWGAPAAGVEGGQQLLLECNDLPPKPAPPEEEDE.

It belongs to the flagellar radial spoke RSP4/6 family. As to quaternary structure, the radial spoke head is made of five different polypeptides (RSP1, RSP4, RSP6, RSP9, and RSP10). In terms of processing, asymmetrically dimethylated at Arg-267 and Arg-398 during flagellum resorption. Probably methylated by PRMT1.

Its subcellular location is the cytoplasm. It localises to the cytoskeleton. It is found in the flagellum axoneme. Functionally, flagellar radial spokes contribute to the regulation of dynein arm activity and thus the pattern of flagellar bending. They consist of a thin stalk, which is attached to the a subfiber of the outer doublet microtubule, and a bulbous head, which is attached to the stalk and appears to interact with the projections from the central pair of microtubules. This chain is Flagellar radial spoke protein 6 (RSP6), found in Chlamydomonas reinhardtii (Chlamydomonas smithii).